The following is a 520-amino-acid chain: MTEISMLKDVQKIIVLDYGSQYNQLIARRIREFGVFSELKSHKITAQEIREINPIGIVLSGGPNSVYADNAFGIDPEIFELGIPILGICYGMQLITDQLGGKVVPAGQAGNREYGQSTLNIRTASKLFADTPDEQLVLMSHGDAVTEIPDGFHLVGDSNDCPYAAIENSEKHIYGIQFHPEVRHSVYGNDILRNFAIFICGARGDWSMDNFIDMQIEKIRETVGDKKVLLGLSGGVDSSVVGVLLQKAIGDQLTCIFVDHGLLRKDEGDQVMGMLGGKFGLNIIRVDAKDRFLELLAGVDDPEKKRKIIGNEFVYVFDDEASKLKGVDFLAQGTLYTDIIESGTETAQTIKSHHNVGGLPEDMQFQLIEPLNTLFKDEVRELGIALGMPENIVWRQPFPGPGLAIRVMGAITEEKLETVRESDAILREEIAKAGLDRDVWQYFTVNTGVRSVGVMGDGRTYDYTIAIRAITSIDGMTADFAQLPWDVLKKISTRIVNEVDHVNRIVYDITSKPPATVEWE.

The Glutamine amidotransferase type-1 domain maps to 12–205; sequence KIIVLDYGSQ…AIFICGARGD (194 aa). Residue Cys89 is the Nucleophile of the active site. Catalysis depends on residues His179 and Glu181. One can recognise a GMPS ATP-PPase domain in the interval 206-395; sequence WSMDNFIDMQ…LGMPENIVWR (190 aa). Residue 233-239 coordinates ATP; sequence SGGVDSS.

As to quaternary structure, homodimer.

The enzyme catalyses XMP + L-glutamine + ATP + H2O = GMP + L-glutamate + AMP + diphosphate + 2 H(+). The protein operates within purine metabolism; GMP biosynthesis; GMP from XMP (L-Gln route): step 1/1. Its function is as follows. Catalyzes the synthesis of GMP from XMP. The polypeptide is GMP synthase [glutamine-hydrolyzing] (Streptococcus uberis (strain ATCC BAA-854 / 0140J)).